Consider the following 211-residue polypeptide: ATP phosphoribosyltransferase (211 aa).

This sequence belongs to the ATP phosphoribosyltransferase family. Short subfamily. In terms of assembly, heteromultimer composed of HisG and HisZ subunits.

Its subcellular location is the cytoplasm. It carries out the reaction 1-(5-phospho-beta-D-ribosyl)-ATP + diphosphate = 5-phospho-alpha-D-ribose 1-diphosphate + ATP. It functions in the pathway amino-acid biosynthesis; L-histidine biosynthesis; L-histidine from 5-phospho-alpha-D-ribose 1-diphosphate: step 1/9. In terms of biological role, catalyzes the condensation of ATP and 5-phosphoribose 1-diphosphate to form N'-(5'-phosphoribosyl)-ATP (PR-ATP). Has a crucial role in the pathway because the rate of histidine biosynthesis seems to be controlled primarily by regulation of HisG enzymatic activity. The chain is ATP phosphoribosyltransferase from Sorangium cellulosum (strain So ce56) (Polyangium cellulosum (strain So ce56)).